The primary structure comprises 242 residues: Terpene cyclase dpfgB (242 aa).

The next 7 membrane-spanning stretches (helical) occupy residues 15-37 (DVAWIADTCKLLMGIGWTTNYVG), 51-71 (ALMALCCNFAWELTYALIYPF), 75-95 (LEMYVHFSGLMLNCGVMYTAV), 112-132 (LPLIFIICVSGFMSGHVALAA), 141-161 (AWSAYGCQLLLSVGGLCQLLC), 169-189 (SYFLWFSRFFGSLVLVPQDIL), and 205-225 (LYIWFVCIFLLLDGSYGICLW).

Belongs to the paxB family.

It is found in the membrane. It functions in the pathway secondary metabolite biosynthesis; terpenoid biosynthesis. Terpene cyclase; part of the gene cluster that mediates the biosynthesis of diterpenoid pyrones. The first step of the pathway is the synthesis of the alpha-pyrone moiety by the polyketide synthase dpfgA via condensation of one acetyl-CoA starter unit with 3 malonyl-CoA units and 2 methylations. The alpha-pyrone is then combined with geranylgeranyl pyrophosphate (GGPP) formed by the GGPP synthase dpfgD through the action of the prenyltransferase dpfgC to yield a linear alpha-pyrone diterpenoid. Subsequent steps in the diterpenoid pyrone biosynthetic pathway involve the decalin core formation, which is initiated by the epoxidation of the C10-C11 olefin by the FAD-dependent oxidoreductase dpfgE, and is followed by a cyclization cascade catalyzed by the terpene cyclase dpfgB. The short chain dehydrogenase/reductase dpfgG then oxidizes the 8S hydroxy group to a ketone and the short chain dehydrogenase/reductase dpfgH reduces the ketone to the 8R hydroxy group to yield higginsianin B. Higginsianin B is further methylated by the methyltransferase dpfgI to produce the intermediate named FDDP B. The cytochrome P450 monooxygenase dfgpJ then catalyzes a three-step oxidation at C-27 to generate a carboxylic acid as well as C-26 hydroxylation. Finally, methyltransferase dpfgK methylates the carboxylic acid generated by dpfgJ, yielding the final diterpenoid pyrones from the pathway which were named FDDP D and FDDP E. The sequence is that of Terpene cyclase dpfgB from Gibberella zeae (strain ATCC MYA-4620 / CBS 123657 / FGSC 9075 / NRRL 31084 / PH-1) (Wheat head blight fungus).